The sequence spans 256 residues: 5-keto-4-deoxy-D-glucarate aldolase (256 aa).

Histidine 50 functions as the Proton acceptor in the catalytic mechanism. Glutamine 151 contributes to the substrate binding site. A Mg(2+)-binding site is contributed by glutamate 153. Residues serine 178 and aspartate 179 each contribute to the substrate site. Aspartate 179 lines the Mg(2+) pocket.

This sequence belongs to the HpcH/HpaI aldolase family. KDGluc aldolase subfamily. In terms of assembly, homohexamer; trimer of dimers. Mg(2+) is required as a cofactor.

The enzyme catalyses 5-dehydro-4-deoxy-D-glucarate = 2-hydroxy-3-oxopropanoate + pyruvate. It catalyses the reaction 2-dehydro-3-deoxy-D-glucarate = 2-hydroxy-3-oxopropanoate + pyruvate. The protein operates within carbohydrate acid metabolism; galactarate degradation; D-glycerate from galactarate: step 2/3. In terms of biological role, catalyzes the reversible retro-aldol cleavage of both 5-keto-4-deoxy-D-glucarate and 2-keto-3-deoxy-D-glucarate to pyruvate and tartronic semialdehyde. The chain is 5-keto-4-deoxy-D-glucarate aldolase from Shigella boydii serotype 4 (strain Sb227).